A 539-amino-acid chain; its full sequence is GMP synthase [glutamine-hydrolyzing] (539 aa).

A Glutamine amidotransferase type-1 domain is found at 4 to 202; sequence KILILDFGSQ…VLQIAGAKPD (199 aa). Cys-81 functions as the Nucleophile in the catalytic mechanism. Active-site residues include His-176 and Glu-178. A GMPS ATP-PPase domain is found at 203 to 395; it reads WIMKNHIEEA…LGLPPEMVYR (193 aa). An ATP-binding site is contributed by 230 to 236; sequence SGGVDSS.

As to quaternary structure, homodimer.

The enzyme catalyses XMP + L-glutamine + ATP + H2O = GMP + L-glutamate + AMP + diphosphate + 2 H(+). It participates in purine metabolism; GMP biosynthesis; GMP from XMP (L-Gln route): step 1/1. In terms of biological role, catalyzes the synthesis of GMP from XMP. The chain is GMP synthase [glutamine-hydrolyzing] from Burkholderia cenocepacia (strain ATCC BAA-245 / DSM 16553 / LMG 16656 / NCTC 13227 / J2315 / CF5610) (Burkholderia cepacia (strain J2315)).